Here is a 299-residue protein sequence, read N- to C-terminus: ATP phosphoribosyltransferase (299 aa).

This sequence belongs to the ATP phosphoribosyltransferase family. Long subfamily. Requires Mg(2+) as cofactor.

It localises to the cytoplasm. The enzyme catalyses 1-(5-phospho-beta-D-ribosyl)-ATP + diphosphate = 5-phospho-alpha-D-ribose 1-diphosphate + ATP. Its pathway is amino-acid biosynthesis; L-histidine biosynthesis; L-histidine from 5-phospho-alpha-D-ribose 1-diphosphate: step 1/9. Its activity is regulated as follows. Feedback inhibited by histidine. In terms of biological role, catalyzes the condensation of ATP and 5-phosphoribose 1-diphosphate to form N'-(5'-phosphoribosyl)-ATP (PR-ATP). Has a crucial role in the pathway because the rate of histidine biosynthesis seems to be controlled primarily by regulation of HisG enzymatic activity. This Rhodopirellula baltica (strain DSM 10527 / NCIMB 13988 / SH1) protein is ATP phosphoribosyltransferase.